The primary structure comprises 957 residues: Bifunctional glutamine synthetase adenylyltransferase/adenylyl-removing enzyme (957 aa).

The adenylyl removase stretch occupies residues 1 to 447 (MFSQLDFTGL…IFNQLIGEEE (447 aa)). Residues 454 to 957 (VNEQLAIWQD…IWQQIFTDNE (504 aa)) form an adenylyl transferase region.

Belongs to the GlnE family. The cofactor is Mg(2+).

The catalysed reaction is [glutamine synthetase]-O(4)-(5'-adenylyl)-L-tyrosine + phosphate = [glutamine synthetase]-L-tyrosine + ADP. It catalyses the reaction [glutamine synthetase]-L-tyrosine + ATP = [glutamine synthetase]-O(4)-(5'-adenylyl)-L-tyrosine + diphosphate. In terms of biological role, involved in the regulation of glutamine synthetase GlnA, a key enzyme in the process to assimilate ammonia. When cellular nitrogen levels are high, the C-terminal adenylyl transferase (AT) inactivates GlnA by covalent transfer of an adenylyl group from ATP to specific tyrosine residue of GlnA, thus reducing its activity. Conversely, when nitrogen levels are low, the N-terminal adenylyl removase (AR) activates GlnA by removing the adenylyl group by phosphorolysis, increasing its activity. The regulatory region of GlnE binds the signal transduction protein PII (GlnB) which indicates the nitrogen status of the cell. The polypeptide is Bifunctional glutamine synthetase adenylyltransferase/adenylyl-removing enzyme (Haemophilus ducreyi (strain 35000HP / ATCC 700724)).